A 263-amino-acid chain; its full sequence is Small ribosomal subunit protein uS2 (263 aa).

This sequence belongs to the universal ribosomal protein uS2 family.

This is Small ribosomal subunit protein uS2 from Roseiflexus castenholzii (strain DSM 13941 / HLO8).